Here is a 523-residue protein sequence, read N- to C-terminus: Synaptotagmin-10 (523 aa).

The Vesicular portion of the chain corresponds to 1–55; it reads MSFHKEDGVNSLCQKALHIVTELCFAGQVEWEKCSGIFPRDRGSQGGSSTDISVS. The segment at 13 to 35 is cysteine motif; the sequence is CQKALHIVTELCFAGQVEWEKCS. Residues 56–76 form a helical membrane-spanning segment; it reads LLAVVVSFCGLALLVVSLFVF. The Cytoplasmic portion of the chain corresponds to 77 to 523; sequence WKLCWPCWKS…CPSPKPPSTP (447 aa). Position 136 is a phosphothreonine (T136). C2 domains follow at residues 231–352 and 363–496; these read ICGK…TVWK and DLGE…THWH. 11 residues coordinate Ca(2+): D262, D268, D320, F321, D322, S325, D328, D394, D400, D454, and D456.

The protein belongs to the synaptotagmin family. Homodimer; disulfide-linked via the cysteine motif. Can also form heterodimers with SYT3, SYT6, SYT7 and SYT9. The cofactor is Ca(2+). In terms of tissue distribution, expressed only in pancreas, lung and kidney.

The protein localises to the cytoplasmic vesicle. Its subcellular location is the secretory vesicle membrane. In terms of biological role, ca(2+) sensor specifically required for the Ca(2+)-dependent exocytosis of secretory vesicles containing IGF1 in neurons of the olfactory bulb. Exocytosis of IGF1 is required for sensory perception of smell. Not involved in Ca(2+)-dependent synaptic vesicle exocytosis. Acts through Ca(2+) and phospholipid binding to the C2 domain: Ca(2+) induces binding of the C2-domains to phospholipid membranes and to assembled SNARE-complexes; both actions contribute to triggering exocytosis. This is Synaptotagmin-10 (SYT10) from Homo sapiens (Human).